Consider the following 207-residue polypeptide: Large ribosomal subunit protein uL4 (207 aa).

This sequence belongs to the universal ribosomal protein uL4 family. Part of the 50S ribosomal subunit.

Functionally, one of the primary rRNA binding proteins, this protein initially binds near the 5'-end of the 23S rRNA. It is important during the early stages of 50S assembly. It makes multiple contacts with different domains of the 23S rRNA in the assembled 50S subunit and ribosome. Its function is as follows. Forms part of the polypeptide exit tunnel. The polypeptide is Large ribosomal subunit protein uL4 (Geobacter sulfurreducens (strain ATCC 51573 / DSM 12127 / PCA)).